The sequence spans 424 residues: ATP-sensitive inward rectifier potassium channel 8 (424 aa).

Residues 1 to 69 (MLARKSIIPE…IFTTLVDLKW (69 aa)) are Cytoplasmic-facing. Serine 6 carries the post-translational modification Phosphoserine. A helical transmembrane segment spans residues 70–94 (RHTLVIFTMSFLCSWLLFAIMWWLV). Residues 95–126 (AFAHGDIYAYMEKGITEKSGLESAVCVTNVRS) are Extracellular-facing. The helical; Pore-forming intramembrane region spans 127–138 (FTSAFLFSIEVQ). The pore-forming intramembrane region spans 139-145 (VTIGFGG). Positions 140 to 145 (TIGFGG) match the Selectivity filter motif. The Extracellular portion of the chain corresponds to 146–154 (RMMTEECPL). The helical transmembrane segment at 155-176 (AITVLILQNIVGLIINAVMLGC) threads the bilayer. Residues 177 to 424 (IFMKTAQAHR…PEGNQCPSES (248 aa)) are Cytoplasmic-facing. The disordered stretch occupies residues 374-424 (LSHQNSLRKRNSMRRNNSMRRSNSIRRNNSSLMVPKVQFMTPEGNQCPSES). Positions 387 to 404 (RRNNSMRRSNSIRRNNSS) are enriched in low complexity.

Belongs to the inward rectifier-type potassium channel (TC 1.A.2.1) family. KCNJ8 subfamily. In terms of assembly, interacts with ABCC9. As to expression, widely expressed, including in pancreatic islets, pituitary, skeletal muscle and heart.

It localises to the membrane. It catalyses the reaction K(+)(in) = K(+)(out). In terms of biological role, inward rectifier potassium channels are characterized by a greater tendency to allow potassium to flow into the cell rather than out of it. Their voltage dependence is regulated by the concentration of extracellular potassium; as external potassium is raised, the voltage range of the channel opening shifts to more positive voltages. The inward rectification is mainly due to the blockage of outward current by internal magnesium. This channel is activated by internal ATP and can be blocked by external barium. Can form a sulfonyllurea-sensitive but ATP-insensitive potassium channel with ABCC9. The sequence is that of ATP-sensitive inward rectifier potassium channel 8 (Kcnj8) from Rattus norvegicus (Rat).